The primary structure comprises 96 residues: Small ribosomal subunit protein bS6 (96 aa).

It belongs to the bacterial ribosomal protein bS6 family.

Binds together with bS18 to 16S ribosomal RNA. This is Small ribosomal subunit protein bS6 from Nocardioides sp. (strain ATCC BAA-499 / JS614).